We begin with the raw amino-acid sequence, 294 residues long: 4-hydroxy-tetrahydrodipicolinate synthase (294 aa).

Pyruvate is bound at residue T44. The Proton donor/acceptor role is filled by Y132. The active-site Schiff-base intermediate with substrate is K160. V202 contacts pyruvate.

It belongs to the DapA family. In terms of assembly, homotetramer; dimer of dimers.

The protein localises to the cytoplasm. It catalyses the reaction L-aspartate 4-semialdehyde + pyruvate = (2S,4S)-4-hydroxy-2,3,4,5-tetrahydrodipicolinate + H2O + H(+). It functions in the pathway amino-acid biosynthesis; L-lysine biosynthesis via DAP pathway; (S)-tetrahydrodipicolinate from L-aspartate: step 3/4. Functionally, catalyzes the condensation of (S)-aspartate-beta-semialdehyde [(S)-ASA] and pyruvate to 4-hydroxy-tetrahydrodipicolinate (HTPA). The sequence is that of 4-hydroxy-tetrahydrodipicolinate synthase from Leptospira biflexa serovar Patoc (strain Patoc 1 / Ames).